The chain runs to 131 residues: ATP synthase lipid-binding protein, mitochondrial (131 aa).

The transit peptide at 1–56 directs the protein to the mitochondrion; the sequence is MLSAARLIAPAARSAIFSNAAVVRPLAAVSTQTQLVPAAPAQLSAVRSFQTTSVTK. The helical transmembrane segment at 72 to 92 threads the bilayer; the sequence is VGVAGSGAGIGTVFGSLIIGY. K99 is modified (N6,N6,N6-trimethyllysine). A helical transmembrane segment spans residues 107-127; sequence ILGFALSEAMGLFCLMMAFLL.

The protein belongs to the ATPase C chain family. F-type ATPases have 2 components, CF(1) - the catalytic core - and CF(0) - the membrane proton channel. CF(1) has five subunits: alpha(3), beta(3), gamma(1), delta(1), epsilon(1). CF(0) has three main subunits: a, b and c. In terms of processing, trimethylated by ATPSCKMT at Lys-99. Methylation may be required for proper incorporation of the C subunit into the ATP synthase complex and mitochondrial respiration.

The protein localises to the mitochondrion membrane. In terms of biological role, mitochondrial membrane ATP synthase (F(1)F(0) ATP synthase or Complex V) produces ATP from ADP in the presence of a proton gradient across the membrane which is generated by electron transport complexes of the respiratory chain. F-type ATPases consist of two structural domains, F(1) - containing the extramembraneous catalytic core and F(0) - containing the membrane proton channel, linked together by a central stalk and a peripheral stalk. During catalysis, ATP synthesis in the catalytic domain of F(1) is coupled via a rotary mechanism of the central stalk subunits to proton translocation. Part of the complex F(0) domain. A homomeric c-ring of probably 10 subunits is part of the complex rotary element. In Manduca sexta (Tobacco hawkmoth), this protein is ATP synthase lipid-binding protein, mitochondrial.